The chain runs to 329 residues: Prostaglandin reductase 1 (329 aa).

At T18 the chain carries Phosphothreonine. S20 bears the Phosphoserine mark. NADP(+)-binding positions include 152–155, K178, Y193, N217, 239–245, 270–272, and N321; these read GAVG, CGAISQY, and FIV. K178 carries the post-translational modification N6-(2-hydroxyisobutyryl)lysine; alternate. K178 is modified (N6-acetyllysine; alternate).

It belongs to the NADP-dependent oxidoreductase L4BD family. As to quaternary structure, monomer or homodimer.

It localises to the cytoplasm. It catalyses the reaction 13,14-dihydro-15-oxo-prostaglandin E1 + NADP(+) = 15-oxoprostaglandin E1 + NADPH + H(+). The catalysed reaction is 13,14-dihydro-15-oxo-prostaglandin E2 + NADP(+) = 15-oxoprostaglandin E2 + NADPH + H(+). It carries out the reaction 13,14-dihydro-15-oxo-prostaglandin F1alpha + NADP(+) = 15-oxoprostaglandin F1alpha + NADPH + H(+). The enzyme catalyses 13,14-dihydro-15-oxo-PGF2alpha + NADP(+) = 15-oxoprostaglandin F2alpha + NADPH + H(+). It catalyses the reaction leukotriene B4 + NADP(+) = 12-oxo-leukotriene B4 + NADPH + H(+). The catalysed reaction is 20-hydroxy-leukotriene B4 + NADP(+) = 12-oxo-20-hydroxy-leukotriene B4 + NADPH + H(+). It carries out the reaction 6-trans-leukotriene B4 + NADP(+) = 12-oxo-(5S)-hydroxy-(6E,8E,10E,14Z)-eicosatetraenoate + NADPH + H(+). The enzyme catalyses (5S,12S)-dihydroxy-(6E,10E,12E,14Z)-eicosatetraenoate + NADP(+) = 12-oxo-(5S)-hydroxy-(6E,8E,10E,14Z)-eicosatetraenoate + NADPH + H(+). It catalyses the reaction an n-alkanal + NADP(+) = an alk-2-enal + NADPH + H(+). The catalysed reaction is hexanal + NADP(+) = (E)-hex-2-enal + NADPH + H(+). It carries out the reaction octanal + NADP(+) = (2E)-octenal + NADPH + H(+). The enzyme catalyses decanal + NADP(+) = (2E)-decenal + NADPH + H(+). It catalyses the reaction dodecanal + NADP(+) = (2E)-dodecenal + NADPH + H(+). The catalysed reaction is 4-hydroxynonanal + NADP(+) = (E)-4-hydroxynon-2-enal + NADPH + H(+). It carries out the reaction pentan-2-one + NADP(+) = (E)-pent-3-en-2-one + NADPH + H(+). The enzyme catalyses nonan-2-one + NADP(+) = (3E)-nonen-2-one + NADPH + H(+). NAD(P)H-dependent oxidoreductase involved in metabolic inactivation of pro- and anti-inflammatory eicosanoids: prostaglandins (PG), leukotrienes (LT) and lipoxins (LX). Catalyzes with high efficiency the reduction of the 13,14 double bond of 15-oxoPGs, including 15-oxo-PGE1, 15-oxo-PGE2, 15-oxo-PGF1-alpha and 15-oxo-PGF2-alpha. Catalyzes with lower efficiency the oxidation of the hydroxyl group at C12 of LTB4 and its derivatives, converting them into biologically less active 12-oxo-LTB4 metabolites. Reduces 15-oxo-LXA4 to 13,14 dihydro-15-oxo-LXA4, enhancing neutrophil recruitment at the inflammatory site. Plays a role in metabolic detoxification of alkenals and ketones. Reduces alpha,beta-unsaturated alkenals and ketones, particularly those with medium-chain length, showing highest affinity toward (2E)-decenal and (3E)-3-nonen-2-one. Inactivates 4-hydroxy-2-nonenal, a cytotoxic lipid constituent of oxidized low-density lipoprotein particles. The protein is Prostaglandin reductase 1 (Ptgr1) of Rattus norvegicus (Rat).